The sequence spans 735 residues: Transcription factor sphG (735 aa).

The segment at residues 13-40 (CDQCRARKIRCSREKPSCRNCGRLGLQC) is a DNA-binding region (zn(2)-C6 fungal-type). A disordered region spans residues 89–110 (TISPSARCPASPASPSPRLSDK). Low complexity predominate over residues 91–106 (SPSARCPASPASPSPR).

The protein resides in the nucleus. Functionally, transcription factor that regulates the expression of the gene cluster that mediates the biosynthesis of sphingofungins, bioactive molecules acting as sphingolipid inhibitors via inhibiting serine palmitoyl transferase (SPT). The protein is Transcription factor sphG of Aspergillus fumigatus (strain CBS 144.89 / FGSC A1163 / CEA10) (Neosartorya fumigata).